A 515-amino-acid polypeptide reads, in one-letter code: Cytochrome P450 1A1 (515 aa).

F225 is a binding site for substrate. Heme is bound at residue C459.

The protein belongs to the cytochrome P450 family. Heme serves as cofactor.

It is found in the endoplasmic reticulum membrane. The protein localises to the microsome membrane. It catalyses the reaction an organic molecule + reduced [NADPH--hemoprotein reductase] + O2 = an alcohol + oxidized [NADPH--hemoprotein reductase] + H2O + H(+). Functionally, cytochromes P450 are a group of heme-thiolate monooxygenases. They oxidize a variety of structurally unrelated compounds, including steroids, fatty acids, and xenobiotics. This Microgadus tomcod (Atlantic tomcod) protein is Cytochrome P450 1A1 (cyp1a1).